A 52-amino-acid polypeptide reads, in one-letter code: Rubredoxin (52 aa).

M1 carries the N-formylmethionine; partial modification. Positions M1–L52 constitute a Rubredoxin-like domain. Fe cation contacts are provided by C6, C9, C39, and C42.

The protein belongs to the rubredoxin family. It depends on Fe(3+) as a cofactor. Observed in four forms, with and without iron, and with and without formylation at Met-1.

Its function is as follows. Rubredoxin is a small nonheme, iron protein lacking acid-labile sulfide. Its single Fe, chelated to 4 Cys, functions as an electron acceptor and may also stabilize the conformation of the molecule. In Heliobacterium mobile (Heliobacillus mobilis), this protein is Rubredoxin.